The primary structure comprises 401 residues: L-rhamnonate dehydratase (401 aa).

Substrate is bound by residues histidine 29 and arginine 55. Mg(2+)-binding residues include aspartate 222, glutamate 248, and glutamate 276. Catalysis depends on histidine 325, which acts as the Proton acceptor. Position 345 (glutamate 345) interacts with substrate.

The protein belongs to the mandelate racemase/muconate lactonizing enzyme family. RhamD subfamily. In terms of assembly, homooctamer; tetramer of dimers. Mg(2+) serves as cofactor.

The catalysed reaction is L-rhamnonate = 2-dehydro-3-deoxy-L-rhamnonate + H2O. Catalyzes the dehydration of L-rhamnonate to 2-keto-3-deoxy-L-rhamnonate (KDR). This is L-rhamnonate dehydratase from Salmonella heidelberg (strain SL476).